A 77-amino-acid polypeptide reads, in one-letter code: Conotoxin ArMKLT2-0122 (77 aa).

The N-terminal stretch at 1–22 is a signal peptide; it reads MKLTCVLIVAVLFLTACQLIAA. A propeptide spanning residues 23-44 is cleaved from the precursor; the sequence is DDSRDLKRFSRRKMRDGMLNTK. Intrachain disulfides connect C50–C65, C57–C68, and C64–C73.

It belongs to the conotoxin O1 superfamily. As to expression, expressed by the venom duct.

Its subcellular location is the secreted. This Conus arenatus (Sand-dusted cone) protein is Conotoxin ArMKLT2-0122.